The chain runs to 508 residues: Photosystem II CP47 reaction center protein (508 aa).

The next 6 helical transmembrane spans lie at 21 to 36 (SVHI…WAGS), 101 to 115 (IVFS…IWHW), 140 to 156 (GIHL…FGAF), 203 to 218 (IAAG…FHLS), 237 to 252 (VLSS…AFVV), and 457 to 472 (SFAL…HGAR).

The protein belongs to the PsbB/PsbC family. PsbB subfamily. As to quaternary structure, PSII is composed of 1 copy each of membrane proteins PsbA, PsbB, PsbC, PsbD, PsbE, PsbF, PsbH, PsbI, PsbJ, PsbK, PsbL, PsbM, PsbT, PsbX, PsbY, PsbZ, Psb30/Ycf12, at least 3 peripheral proteins of the oxygen-evolving complex and a large number of cofactors. It forms dimeric complexes. Binds multiple chlorophylls. PSII binds additional chlorophylls, carotenoids and specific lipids. serves as cofactor.

It is found in the plastid. The protein localises to the chloroplast thylakoid membrane. Functionally, one of the components of the core complex of photosystem II (PSII). It binds chlorophyll and helps catalyze the primary light-induced photochemical processes of PSII. PSII is a light-driven water:plastoquinone oxidoreductase, using light energy to abstract electrons from H(2)O, generating O(2) and a proton gradient subsequently used for ATP formation. This Eucalyptus globulus subsp. globulus (Tasmanian blue gum) protein is Photosystem II CP47 reaction center protein.